Consider the following 384-residue polypeptide: GTPase Obg (384 aa).

Residues 1 to 159 form the Obg domain; the sequence is MKFIDEAKIE…RSLQLELKVL (159 aa). Positions 20–46 are disordered; the sequence is ATSFRREKFVPRGGPDGGDGGKGGSVW. Positions 33 to 43 are enriched in gly residues; sequence GPDGGDGGKGG. The OBG-type G domain maps to 160–348; it reads ADVGLLGMPN…LVHQINQYLT (189 aa). Residues 166 to 173, 191 to 195, 213 to 216, 284 to 287, and 329 to 331 each bind GTP; these read GMPNAGKS, FTTLH, DIPG, NKLD, and SAL. Mg(2+)-binding residues include Ser173 and Thr193.

This sequence belongs to the TRAFAC class OBG-HflX-like GTPase superfamily. OBG GTPase family. Monomer. Requires Mg(2+) as cofactor.

The protein resides in the cytoplasm. An essential GTPase which binds GTP, GDP and possibly (p)ppGpp with moderate affinity, with high nucleotide exchange rates and a fairly low GTP hydrolysis rate. Plays a role in control of the cell cycle, stress response, ribosome biogenesis and in those bacteria that undergo differentiation, in morphogenesis control. This chain is GTPase Obg, found in Neisseria meningitidis serogroup B (strain ATCC BAA-335 / MC58).